Consider the following 127-residue polypeptide: Multiple antibiotic resistance protein MarA (127 aa).

The 99-residue stretch at 12-110 (HSILDWIEDN…DVPPHKYRMT (99 aa)) folds into the HTH araC/xylS-type domain. 2 consecutive DNA-binding regions (H-T-H motif) follow at residues 29–50 (EKVS…KKET) and 77–100 (ILYL…KNYF).

As to quaternary structure, monomer.

In terms of biological role, may be a transcriptional activator of genes involved in the multiple antibiotic resistance (Mar) phenotype. It can also activate genes such as sodA, zwf and micF. The sequence is that of Multiple antibiotic resistance protein MarA (marA) from Escherichia coli (strain K12).